The chain runs to 115 residues: Guanylin (115 aa).

An N-terminal signal peptide occupies residues 1-21; that stretch reads MNACVLSVLCLLGAVAVLVEG. The propeptide occupies 22–100; the sequence is VTVQDGDLSF…LQRLEAIAQD (79 aa). 3 disulfides stabilise this stretch: cysteine 69-cysteine 82, cysteine 104-cysteine 112, and cysteine 107-cysteine 115.

The protein belongs to the guanylin family.

Its subcellular location is the secreted. Its function is as follows. Endogenous activator of intestinal guanylate cyclase. It stimulates this enzyme through the same receptor binding region as the heat-stable enterotoxins. This Notomys alexis (Spinifex hopping mouse) protein is Guanylin (GUCA2A).